The chain runs to 207 residues: Large ribosomal subunit protein uL4 (207 aa).

Residues 48–86 (THKVKNRSEVRGGGRKPWRQKGTGRARQGSIRSPQWRGG) form a disordered region. Residues 60-71 (GGRKPWRQKGTG) are compositionally biased toward basic residues.

It belongs to the universal ribosomal protein uL4 family. As to quaternary structure, part of the 50S ribosomal subunit.

One of the primary rRNA binding proteins, this protein initially binds near the 5'-end of the 23S rRNA. It is important during the early stages of 50S assembly. It makes multiple contacts with different domains of the 23S rRNA in the assembled 50S subunit and ribosome. In terms of biological role, forms part of the polypeptide exit tunnel. This chain is Large ribosomal subunit protein uL4, found in Bacillus licheniformis (strain ATCC 14580 / DSM 13 / JCM 2505 / CCUG 7422 / NBRC 12200 / NCIMB 9375 / NCTC 10341 / NRRL NRS-1264 / Gibson 46).